The sequence spans 402 residues: Enoyl-[acyl-carrier-protein] reductase [NADH] (402 aa).

NAD(+)-binding positions include 48–53 (GASSGY), 74–75 (FE), 111–112 (DA), and 140–141 (LA). Tyr226 is a binding site for substrate. The Proton donor role is filled by Tyr236. Residues Lys245 and 274-276 (VVT) contribute to the NAD(+) site.

This sequence belongs to the TER reductase family. Monomer.

The enzyme catalyses a 2,3-saturated acyl-[ACP] + NAD(+) = a (2E)-enoyl-[ACP] + NADH + H(+). The protein operates within lipid metabolism; fatty acid biosynthesis. Its function is as follows. Involved in the final reduction of the elongation cycle of fatty acid synthesis (FAS II). Catalyzes the reduction of a carbon-carbon double bond in an enoyl moiety that is covalently linked to an acyl carrier protein (ACP). The protein is Enoyl-[acyl-carrier-protein] reductase [NADH] of Xanthomonas axonopodis pv. citri (strain 306).